The sequence spans 88 residues: Large ribosomal subunit protein bL27 (88 aa).

Residues 1-20 (MASKKGVGSTKDGRDSIAKR) are disordered.

Belongs to the bacterial ribosomal protein bL27 family.

This chain is Large ribosomal subunit protein bL27 (rpmA), found in Geobacillus stearothermophilus (Bacillus stearothermophilus).